The following is a 198-amino-acid chain: Elongation factor Ts (198 aa).

The interval 82–85 is involved in Mg(2+) ion dislocation from EF-Tu; it reads SDFV.

The protein belongs to the EF-Ts family.

Its subcellular location is the cytoplasm. In terms of biological role, associates with the EF-Tu.GDP complex and induces the exchange of GDP to GTP. It remains bound to the aminoacyl-tRNA.EF-Tu.GTP complex up to the GTP hydrolysis stage on the ribosome. The chain is Elongation factor Ts from Desulfosudis oleivorans (strain DSM 6200 / JCM 39069 / Hxd3) (Desulfococcus oleovorans).